The following is a 333-amino-acid chain: GTPase Obg (333 aa).

Positions 1–159 constitute an Obg domain; the sequence is MQFIDLAEIH…RHLRLELKLL (159 aa). The region spanning 160 to 328 is the OBG-type G domain; it reads AEVGIIGLPN…LLEAVWQELG (169 aa). Residues 166 to 173, 191 to 195, 213 to 216, 280 to 283, and 309 to 311 contribute to the GTP site; these read GLPNAGKS, FTTLV, DIPG, NKID, and SAV. 2 residues coordinate Mg(2+): S173 and T193.

It belongs to the TRAFAC class OBG-HflX-like GTPase superfamily. OBG GTPase family. Monomer. Mg(2+) is required as a cofactor.

The protein resides in the cytoplasm. In terms of biological role, an essential GTPase which binds GTP, GDP and possibly (p)ppGpp with moderate affinity, with high nucleotide exchange rates and a fairly low GTP hydrolysis rate. Plays a role in control of the cell cycle, stress response, ribosome biogenesis and in those bacteria that undergo differentiation, in morphogenesis control. The protein is GTPase Obg of Thermosynechococcus vestitus (strain NIES-2133 / IAM M-273 / BP-1).